We begin with the raw amino-acid sequence, 509 residues long: Photosystem II CP47 reaction center protein (509 aa).

6 consecutive transmembrane segments (helical) span residues 21–36 (SVHL…WAGS), 101–115 (IVLS…IWHW), 140–156 (GIHL…FGAF), 203–218 (IAAG…FHLN), 237–252 (VLSS…SFVV), and 457–472 (NFAL…HGSR).

It belongs to the PsbB/PsbC family. PsbB subfamily. PSII is composed of 1 copy each of membrane proteins PsbA, PsbB, PsbC, PsbD, PsbE, PsbF, PsbH, PsbI, PsbJ, PsbK, PsbL, PsbM, PsbT, PsbY, PsbZ, Psb30/Ycf12, at least 3 peripheral proteins of the oxygen-evolving complex and a large number of cofactors. It forms dimeric complexes. Binds multiple chlorophylls. PSII binds additional chlorophylls, carotenoids and specific lipids. serves as cofactor.

Its subcellular location is the plastid. The protein resides in the chloroplast thylakoid membrane. One of the components of the core complex of photosystem II (PSII). It binds chlorophyll and helps catalyze the primary light-induced photochemical processes of PSII. PSII is a light-driven water:plastoquinone oxidoreductase, using light energy to abstract electrons from H(2)O, generating O(2) and a proton gradient subsequently used for ATP formation. The protein is Photosystem II CP47 reaction center protein of Cyanidium caldarium (Red alga).